The following is a 230-amino-acid chain: NAD-dependent protein deacylase 1 (230 aa).

Residues 1 to 226 (MESGIPTYRE…SHLSAFLSRE (226 aa)) enclose the Deacetylase sirtuin-type domain. The substrate site is built by Tyr-41 and Arg-44. 75–78 (QNID) is an NAD(+) binding site. The active-site Proton acceptor is His-93. Positions 101, 104, 128, and 131 each coordinate Zn(2+). Residues 168–170 (GTS), 194–196 (NTV), and Ala-212 contribute to the NAD(+) site.

Belongs to the sirtuin family. Class III subfamily. Requires Zn(2+) as cofactor.

The protein localises to the cytoplasm. The catalysed reaction is N(6)-acetyl-L-lysyl-[protein] + NAD(+) + H2O = 2''-O-acetyl-ADP-D-ribose + nicotinamide + L-lysyl-[protein]. It carries out the reaction N(6)-succinyl-L-lysyl-[protein] + NAD(+) + H2O = 2''-O-succinyl-ADP-D-ribose + nicotinamide + L-lysyl-[protein]. Its function is as follows. NAD-dependent lysine deacetylase and desuccinylase that specifically removes acetyl and succinyl groups on target proteins. Modulates the activities of several proteins which are inactive in their acylated form. The protein is NAD-dependent protein deacylase 1 of Pseudomonas syringae pv. tomato (strain ATCC BAA-871 / DC3000).